The following is a 144-amino-acid chain: Large ribosomal subunit protein uL16 (144 aa).

Over residues 1-17 (MLQPKKTKFRRQQKGRA) the composition is skewed to basic residues. Residues 1-22 (MLQPKKTKFRRQQKGRAKGNAQ) form a disordered region.

The protein belongs to the universal ribosomal protein uL16 family. Part of the 50S ribosomal subunit.

Its function is as follows. Binds 23S rRNA and is also seen to make contacts with the A and possibly P site tRNAs. This Bacteroides fragilis (strain ATCC 25285 / DSM 2151 / CCUG 4856 / JCM 11019 / LMG 10263 / NCTC 9343 / Onslow / VPI 2553 / EN-2) protein is Large ribosomal subunit protein uL16.